A 142-amino-acid chain; its full sequence is Centromere protein S (142 aa).

The disordered stretch occupies residues 107 to 142 (LKGKAKKKRKPEDESRSSRESMAEELDGAEELQSES). Positions 116-128 (KPEDESRSSRESM) are enriched in basic and acidic residues. Acidic residues predominate over residues 129 to 142 (AEELDGAEELQSES).

Belongs to the TAF9 family. CENP-S/MHF1 subfamily. As to quaternary structure, heterodimer with CENPX, sometimes called MHF; this interaction stabilizes both partners. MHF heterodimers can assemble to form tetrameric structures. MHF also coassemble with CENPT-CENPW heterodimers at centromeres to form the tetrameric CENP-T-W-S-X complex. Forms a discrete complex with FANCM and CENPX, called FANCM-MHF; this interaction, probably mediated by direct binding between CENPS and FANCM, leads to synergistic activation of double-stranded DNA binding and strongly stimulates FANCM-mediated DNA remodeling. Recruited by FANCM to the Fanconi anemia (FA) core complex, which consists of CENPS, CENPX, FANCA, FANCB, FANCC, FANCE, FANCF, FANCG, FANCL, FANCM, FAAP24 and FAAP100. The FA core complex associates with Bloom syndrome (BLM) complex, which consists of at least BLM, DNA topoisomerase 3-alpha (TOP3A), RMI1/BLAP75, RPA1/RPA70 and RPA2/RPA32. The super complex between FA and BLM is called BRAFT. Component of the CENPA-CAD complex, composed of CENPI, CENPK, CENPL, CENPO, CENPP, CENPQ, CENPR and CENPS. The CENPA-CAD complex is probably recruited on centromeres by the CENPA-NAC complex, at least composed of CENPA, CENPC, CENPH, CENPM, CENPN, CENPT and CENPU.

The protein resides in the nucleus. The protein localises to the chromosome. It localises to the centromere. It is found in the kinetochore. In terms of biological role, DNA-binding component of the Fanconi anemia (FA) core complex. Required for the normal activation of the FA pathway, leading to monoubiquitination of the FANCI-FANCD2 complex in response to DNA damage, cellular resistance to DNA cross-linking drugs, and prevention of chromosomal breakage. In complex with CENPX (MHF heterodimer), crucial cofactor for FANCM in both binding and ATP-dependent remodeling of DNA. Stabilizes FANCM. In complex with CENPX and FANCM (but not other FANC proteins), rapidly recruited to blocked forks and promotes gene conversion at blocked replication forks. In complex with CENPT, CENPW and CENPX (CENP-T-W-S-X heterotetramer), involved in the formation of a functional kinetochore outer plate, which is essential for kinetochore-microtubule attachment and faithful mitotic progression. As a component of MHF and CENP-T-W-S-X complexes, binds DNA and bends it to form a nucleosome-like structure. DNA-binding function is fulfilled in the presence of CENPX, with the following preference for DNA substates: Holliday junction &gt; double-stranded &gt; splay arm &gt; single-stranded. Does not bind DNA on its own. This Mus musculus (Mouse) protein is Centromere protein S (Cenps).